Consider the following 334-residue polypeptide: MPTDAKRPLQLNDQGQLRHFISLDGLPRELLTEILDTADSFLEVGARAVKKVPLLRGKTVCNVFFENSTRTRTTFELAAQRLSADVISLNVSTSSTSKGETLTDTLRNLEAMAADMFVVRHSDSGAAHFIAEHVSPNVAVINGGDGRHAHPTQGMLDMLTIRRHKGNFEQLSVAIVGDILHSRVARSNMLALKTLGCPDIRVIAPRTLLPVGLEEQYGVRVFTNADEGLKDVDVVIMLRLQRERMQGGLLPSEGEFFRLYGLTEKRLKLARPDAIVMHPGPINRGVEIESAVADGAQSVILNQVTYGIAIRMAVLSMAMSGQNTQRQLEQEDAE.

Arg70 and Thr71 together coordinate carbamoyl phosphate. Lys98 provides a ligand contact to L-aspartate. Residues Arg120, His150, and Gln153 each coordinate carbamoyl phosphate. Positions 183 and 239 each coordinate L-aspartate. 2 residues coordinate carbamoyl phosphate: Gly280 and Pro281.

The protein belongs to the aspartate/ornithine carbamoyltransferase superfamily. ATCase family. In terms of assembly, heterododecamer (2C3:3R2) of six catalytic PyrB chains organized as two trimers (C3), and six regulatory PyrI chains organized as three dimers (R2).

The catalysed reaction is carbamoyl phosphate + L-aspartate = N-carbamoyl-L-aspartate + phosphate + H(+). Its pathway is pyrimidine metabolism; UMP biosynthesis via de novo pathway; (S)-dihydroorotate from bicarbonate: step 2/3. In terms of biological role, catalyzes the condensation of carbamoyl phosphate and aspartate to form carbamoyl aspartate and inorganic phosphate, the committed step in the de novo pyrimidine nucleotide biosynthesis pathway. This chain is Aspartate carbamoyltransferase catalytic subunit, found in Pseudomonas paraeruginosa (strain DSM 24068 / PA7) (Pseudomonas aeruginosa (strain PA7)).